The following is a 236-amino-acid chain: Small ribosomal subunit protein uS3c (236 aa).

Positions 47–127 (VRKYVRSSSR…KLNMTLSQVA (81 aa)) constitute a KH type-2 domain.

It belongs to the universal ribosomal protein uS3 family. As to quaternary structure, part of the 30S ribosomal subunit.

Its subcellular location is the plastid. The protein localises to the chloroplast. The sequence is that of Small ribosomal subunit protein uS3c (rps3) from Zygnema circumcarinatum (Green alga).